The sequence spans 259 residues: Ribonuclease HII (259 aa).

Positions 70 to 258 constitute an RNase H type-2 domain; the sequence is TLIAGIDEVG…VKSLVLGKKE (189 aa). A divalent metal cation contacts are provided by aspartate 76, glutamate 77, and aspartate 168.

The protein belongs to the RNase HII family. The cofactor is Mn(2+). Requires Mg(2+) as cofactor.

It localises to the cytoplasm. It catalyses the reaction Endonucleolytic cleavage to 5'-phosphomonoester.. In terms of biological role, endonuclease that specifically degrades the RNA of RNA-DNA hybrids. The protein is Ribonuclease HII of Streptococcus pneumoniae serotype 4 (strain ATCC BAA-334 / TIGR4).